The following is a 159-amino-acid chain: 17 kDa surface antigen (159 aa).

A signal peptide spans 1-19 (MKLLSKIMIIALATSMLQA). Residue Cys-20 is the site of N-palmitoyl cysteine attachment. The S-diacylglycerol cysteine moiety is linked to residue Cys-20.

This sequence belongs to the rickettsiale 17 kDa surface antigen family.

It localises to the cell outer membrane. In Rickettsia conorii (strain ATCC VR-613 / Malish 7), this protein is 17 kDa surface antigen (omp).